The primary structure comprises 152 residues: FMN reductase (NADH) RutF (152 aa).

This sequence belongs to the non-flavoprotein flavin reductase family. RutF subfamily.

The enzyme catalyses FMNH2 + NAD(+) = FMN + NADH + 2 H(+). In terms of biological role, catalyzes the reduction of FMN to FMNH2 which is used to reduce pyrimidine by RutA via the Rut pathway. The polypeptide is FMN reductase (NADH) RutF (Shigella sonnei (strain Ss046)).